An 878-amino-acid chain; its full sequence is Phosphoenolpyruvate carboxylase (878 aa).

Residues H140 and K545 contribute to the active site.

This sequence belongs to the PEPCase type 1 family. Mg(2+) serves as cofactor.

The enzyme catalyses oxaloacetate + phosphate = phosphoenolpyruvate + hydrogencarbonate. Functionally, forms oxaloacetate, a four-carbon dicarboxylic acid source for the tricarboxylic acid cycle. This is Phosphoenolpyruvate carboxylase from Pseudomonas syringae pv. tomato (strain ATCC BAA-871 / DC3000).